Reading from the N-terminus, the 133-residue chain is Cytochrome c-type biogenesis protein CcmE (133 aa).

Over 1–7 the chain is Cytoplasmic; that stretch reads MKKKHKR. A helical; Signal-anchor for type II membrane protein transmembrane segment spans residues 8 to 28; sequence LLITSGIFCFLSCIVFFILTT. Residues 29-133 are Periplasmic-facing; that stretch reads LKENISFFYT…YMPKVLKQIP (105 aa). Heme contacts are provided by His120 and Tyr124.

It belongs to the CcmE/CycJ family.

It is found in the cell inner membrane. Heme chaperone required for the biogenesis of c-type cytochromes. Transiently binds heme delivered by CcmC and transfers the heme to apo-cytochromes in a process facilitated by CcmF and CcmH. The protein is Cytochrome c-type biogenesis protein CcmE of Wolbachia sp. subsp. Drosophila simulans (strain wRi).